Here is a 277-residue protein sequence, read N- to C-terminus: Type IV methyl-directed restriction enzyme EcoKMcrA (277 aa).

Residues 207 to 257 enclose the HNH domain; sequence CENCGKNAPFYLNDGNPYLEVHHVIPLSSGGADTTDNCVALCPNCHRELHY.

Its function is as follows. Restriction of 5-methyl and 5-hydroxymethylcytosines at the specific DNA sequence 5'-C(me)CGG-3'. In Escherichia coli (strain K12), this protein is Type IV methyl-directed restriction enzyme EcoKMcrA.